The sequence spans 399 residues: Yellow-related salivary protein LJM11 (399 aa).

Positions 1 to 18 (MKVFFSIFTLVLFQGTLG) are cleaved as a signal peptide. Cysteine 115 and cysteine 186 are joined by a disulfide. Residue asparagine 213 is glycosylated (N-linked (GlcNAc...) asparagine). Cysteine 319 and cysteine 395 are oxidised to a cystine. The serotonin site is built by threonine 345, asparagine 360, and phenylalanine 362.

It belongs to the major royal jelly protein family. As to expression, salivary gland (at protein level).

It localises to the secreted. Functionally, probably modulates blood feeding of sand flies on vertebrate species by binding and sequestering different mediators involved in the host response. Binds biogenic amines. Binds serotonin with high affinity. Binds adrenaline and noradrenaline. Binds dopamine and octopamine. Poorly binds histamine. Induces a delayed type hypersensitivity response in host tissues. Induces systemic Th1 immune response in the host. Immunogenic; elicits antibody production in the host. Functions as a chemoattractant for host neutrophils; likely acts through a G-protein-coupled receptor and effect is dependent on calcium influx. In terms of biological role, (Microbial infection) Modulates infection caused by Leishmania species in the host. The chain is Yellow-related salivary protein LJM11 from Lutzomyia longipalpis (Sand fly).